We begin with the raw amino-acid sequence, 476 residues long: Neuropeptide-like precursor 1 (476 aa).

Positions 1–34 are cleaved as a signal peptide; that stretch reads MNDAGASIGRHRGCLLLFVALAVAFSSYVEQVES. Val-133 is modified (valine amide). Propeptides lie at residues 160 to 232 and 259 to 476; these read DEAT…NSYF and YVMP…RKNQ. Disordered regions lie at residues 275–298 and 360–385; these read QNDIDGEKRSVDDDDDDDDDDGEV and PEVESPVDPDDADIPPPPVPAHSHPT. The span at 286 to 297 shows a compositional bias: acidic residues; it reads DDDDDDDDDDGE.

As to expression, neuropeptide-like precursor 1-1: Expressed in antennal lobe (AL), corpora cardiaca (CC), corpora allata (CA) and gnathal ganglion (GNG) (at protein level). Expression in AL detected in all animals, in GNG in most animals, expression in CC and CA in few animals (at protein level). Neuropeptide-like precursor 1-2: Expressed in antennal lobe (AL), corpora cardiaca (CC), corpora allata (CA) and gnathal ganglion (GNG) (at protein level). Expression in AL detected in all animals, in GNG in some animals, expression in CC and CA in few animals (at protein level). Neuropeptide-like precursor 1-3: Not expressed in antennal lobe (AL), corpora cardiaca (CC), corpora allata (CA) and gnathal ganglion (GNG) (at protein level). Neuropeptide-like precursor 1-4: Expressed in antennal lobe (AL) and gnathal ganglion (GNG) (at protein level). Expression in AL detected in most animals, in GNG in some animals (at protein level). Not expressed in CC and CA (at protein level). YRVamide: Expressed in antennal lobe (AL), corpora cardiaca (CC), corpora allata (CA) and gnathal ganglion (GNG) (at protein level). Expression in AL and GNG detected in most animals, expression in CC and CA in few animals (at protein level). Extended YRVamide: Expressed in antennal lobe (AL) and gnathal ganglion (GNG) (at protein level). Expression in AL detected in most animals, in GNG in some animals (at protein level). Not expressed in corpora cardiaca (CC) and corpora allata (CA) (at protein level). Neuropeptide-like precursor 1-6: Expressed in antennal lobe (AL), corpora cardiaca (CC), corpora allata (CA) and gnathal ganglion (GNG) (at protein level). Expression in GNG detected in all animals, expression in AL in most animals, in CC and CA in few animals (at protein level). Neuropeptide-like precursor 1-6(1-11): Expressed in antennal lobe (AL) and gnathal ganglion (GNG) in most animals (at protein level). Not expressed in corpora cardiaca (CC) and corpora allata (CA) (at protein level). Neuropeptide-like precursor 1-9: Expressed in antennal lobe (AL) and gnathal ganglion (GNG) (at protein level). Expression in AL detected in all animals in GNG in most (at protein level). Not expressed in corpora cardiaca (CC) and corpora allata (CA) (at protein level).

The protein localises to the secreted. The sequence is that of Neuropeptide-like precursor 1 from Agrotis ipsilon (Black cutworm moth).